A 770-amino-acid polypeptide reads, in one-letter code: DNA ligase 1 (770 aa).

Residues 1–18 (MSTGEGTAEQTATGTPAQ) are compositionally biased toward low complexity. Residues 1–27 (MSTGEGTAEQTATGTPAQNGRESIPSD) are disordered. NAD(+)-binding positions include 57-61 (DAEFD), 106-107 (SL), and Glu-142. The N6-AMP-lysine intermediate role is filled by Lys-144. NAD(+)-binding residues include Arg-165, Glu-202, Lys-318, and Lys-342. 4 residues coordinate Zn(2+): Cys-439, Cys-442, Cys-458, and Cys-464. The region spanning 657–746 (STPRTLEGLT…PAAVGDAAEA (90 aa)) is the BRCT domain. The segment at 741-770 (GDAAEADGGDAPEESAALQEEKAAAVEETA) is disordered. The segment covering 744–753 (AEADGGDAPE) has biased composition (acidic residues). A compositionally biased stretch (basic and acidic residues) spans 759–770 (QEEKAAAVEETA).

The protein belongs to the NAD-dependent DNA ligase family. LigA subfamily. Mg(2+) is required as a cofactor. Mn(2+) serves as cofactor.

The catalysed reaction is NAD(+) + (deoxyribonucleotide)n-3'-hydroxyl + 5'-phospho-(deoxyribonucleotide)m = (deoxyribonucleotide)n+m + AMP + beta-nicotinamide D-nucleotide.. In terms of biological role, DNA ligase that catalyzes the formation of phosphodiester linkages between 5'-phosphoryl and 3'-hydroxyl groups in double-stranded DNA using NAD as a coenzyme and as the energy source for the reaction. It is essential for DNA replication and repair of damaged DNA. This is DNA ligase 1 from Pseudarthrobacter chlorophenolicus (strain ATCC 700700 / DSM 12829 / CIP 107037 / JCM 12360 / KCTC 9906 / NCIMB 13794 / A6) (Arthrobacter chlorophenolicus).